We begin with the raw amino-acid sequence, 274 residues long: Acetylaranotin bis-thiomethyltransferase (274 aa).

This sequence belongs to the class I-like SAM-binding methyltransferase superfamily.

It functions in the pathway mycotoxin biosynthesis. In terms of biological role, acetylaranotin bis-thiomethyltransferase involved in the biosynthesis of acetylaranotin derivatives, members of the epipolythiodioxopiperazine (ETP) class of toxins characterized by a disulfide-bridged cyclic dipeptide. The first step of acetylaranotin biosynthesis is performed by the NRPS ataP which produces diketopiperazine cyclo-L-Phe-L-Phe via the condensation of 2 phenylalanines (L-Phe). The ataC domain of ataTC then catalyzes the formation of bishydroxylation of cyclo-L-Phe-L-Phe. The glutathione S-transferase domain ataG in ataIMG further catalyzes the conjugation of two glutathiones to the bishydroxylated intermediate. Next, the dipeptidase ataJ removes the Glu residues. The following step is performed by the carbon sulfur lyase domain ataI of ataIMG which may convert the bis-cysteinyl adduct to yield an epidithiol intermediate. The ataT domain from ataTC then catalyzes the oxidation of the free dithiols, followed by a cyclization step catalyzed by the cytochrome P450 ataF. AtaF probably acts as an epoxidase to promote a dual epoxidation formation at C8 and C9 along with C8' and C9', followed by the spontaneous nucleophilic attack of the amide nitrogens N10 and N10' to yield an intermediate with the pyrrolidine partial structure. The final steps of acetylaranotin biosynthesis involve the acetylation and ring rearrangement of an epitetrathiodiketopiperazine intermediate to produce acetylaranotin. AtaH probably catalyzes the acetylation of epitetrathiodiketopiperazine to produce a diacetate and ataY is responsible for the formation of the dihydrooxepin moiety that converts the diacetate intermediate to acetylaranotin via acetylapoaranotin. Both enzymes could function independently in the absence of the other. The acetylaranotin bis-thiomethyltransferase ataS located outside of acetylaranotin gene cluster is the main thiomethyltransferase responsible for converting acetylaranotin and its related intermediates to their methylated forms. This is Acetylaranotin bis-thiomethyltransferase from Aspergillus terreus (strain NIH 2624 / FGSC A1156).